A 450-amino-acid chain; its full sequence is Tubulin alpha-1 chain (450 aa).

Gln11, Glu71, Gly144, Thr145, Thr179, Asn206, and Asn228 together coordinate GTP. Glu71 serves as a coordination point for Mg(2+). Glu254 is a catalytic residue. The residue at position 349 (Thr349) is a Phosphothreonine. The disordered stretch occupies residues 431–450 (DYEEVGGEGAEDDDEEGDEY).

Belongs to the tubulin family. As to quaternary structure, dimer of alpha and beta chains. A typical microtubule is a hollow water-filled tube with an outer diameter of 25 nm and an inner diameter of 15 nM. Alpha-beta heterodimers associate head-to-tail to form protofilaments running lengthwise along the microtubule wall with the beta-tubulin subunit facing the microtubule plus end conferring a structural polarity. Microtubules usually have 13 protofilaments but different protofilament numbers can be found in some organisms and specialized cells. It depends on Mg(2+) as a cofactor. Undergoes a tyrosination/detyrosination cycle, the cyclic removal and re-addition of a C-terminal tyrosine residue by the enzymes tubulin tyrosine carboxypeptidase (TTCP) and tubulin tyrosine ligase (TTL), respectively.

It is found in the cytoplasm. Its subcellular location is the cytoskeleton. It catalyses the reaction GTP + H2O = GDP + phosphate + H(+). Tubulin is the major constituent of microtubules, a cylinder consisting of laterally associated linear protofilaments composed of alpha- and beta-tubulin heterodimers. Microtubules grow by the addition of GTP-tubulin dimers to the microtubule end, where a stabilizing cap forms. Below the cap, tubulin dimers are in GDP-bound state, owing to GTPase activity of alpha-tubulin. The chain is Tubulin alpha-1 chain (TUBA1) from Arabidopsis thaliana (Mouse-ear cress).